Reading from the N-terminus, the 883-residue chain is Alanine--tRNA ligase (883 aa).

Zn(2+)-binding residues include H560, H564, C665, and H669.

Belongs to the class-II aminoacyl-tRNA synthetase family. Requires Zn(2+) as cofactor.

It localises to the cytoplasm. The catalysed reaction is tRNA(Ala) + L-alanine + ATP = L-alanyl-tRNA(Ala) + AMP + diphosphate. In terms of biological role, catalyzes the attachment of alanine to tRNA(Ala) in a two-step reaction: alanine is first activated by ATP to form Ala-AMP and then transferred to the acceptor end of tRNA(Ala). Also edits incorrectly charged Ser-tRNA(Ala) and Gly-tRNA(Ala) via its editing domain. In Mesomycoplasma hyopneumoniae (strain 7448) (Mycoplasma hyopneumoniae), this protein is Alanine--tRNA ligase.